The chain runs to 781 residues: Isoquinoline 1-oxidoreductase subunit beta (781 aa).

Heterodimer of an alpha chain and a beta chain.

It catalyses the reaction isoquinoline + A + H2O = isoquinolin-1(2H)-one + AH2. Functionally, specific towards N-containing N-heterocyclic substrates, including isoquinoline, isoquinolin-5-ol, phthalazine and quinazoline. The sequence is that of Isoquinoline 1-oxidoreductase subunit beta (iorB) from Brevundimonas diminuta (Pseudomonas diminuta).